The sequence spans 871 residues: Transient receptor potential cation channel subfamily V member 4 (871 aa).

Disordered regions lie at residues 1-68 and 110-143; these read MADP…PNLR and YGTY…PQPP. Over 1–469 the chain is Cytoplasmic; that stretch reads MADPGDGPRA…RDKWRKFGAV (469 aa). Phosphotyrosine; by SRC-type Tyr-kinases is present on Y110. Residues 116–129 are compositionally biased toward basic and acidic residues; sequence HPSDNKRWRRKVVE. ATP contacts are provided by residues K192, K197, N201, 236-239, and R248; that span reads YRGQ. ANK repeat units follow at residues 237 to 266 and 284 to 313; these read RGQT…DVHA and FGEL…KKAD. 249 to 251 contributes to the a 1,2-diacyl-sn-glycero-3-phospho-(1D-myo-inositol-4,5-bisphosphate) binding site; that stretch reads RCK. Y253 carries the phosphotyrosine; by LYN modification. A 1,2-diacyl-sn-glycero-3-phospho-(1D-myo-inositol-4,5-bisphosphate)-binding positions include 296–299 and K344; that span reads NQPH. An ANK 3 repeat occupies 369 to 398; sequence DGLSPLMMAAKTGKIGVFQHIIRREVTDED. The helical transmembrane segment at 470–490 threads the bilayer; that stretch reads SFYINVVSYLCAMVIFTLTAY. Residues 491 to 507 lie on the Extracellular side of the membrane; sequence YQPLEGTPPYPYRTTVD. The helical transmembrane segment at 508 to 534 threads the bilayer; the sequence is YLRLAGEVITLFTGVLFFFTSIKDLFT. Topologically, residues 535–547 are cytoplasmic; sequence KKCPGVNSLFVDG. A helical membrane pass occupies residues 548 to 568; that stretch reads SFQLLYFIYSVLVVVSAALYL. Residues 569 to 572 lie on the Extracellular side of the membrane; it reads AGIE. The helical transmembrane segment at 573-593 threads the bilayer; it reads AYLAVMVFALVLGWMNALYFT. Topologically, residues 594 to 608 are cytoplasmic; the sequence is RGLKLTGTYSIMIQK. A helical membrane pass occupies residues 609-636; the sequence is ILFKDLFRFLLVYLLFMIGYASALVTLL. Topologically, residues 637–665 are extracellular; it reads NPCTNMKVCDEDQSNCTVPTYPACRDSET. The N-linked (GlcNAc...) asparagine glycan is linked to N651. Positions 666–685 form an intramembrane region, pore-forming; that stretch reads FSAFLLDLFKLTIGMGDLEM. Positions 679–682 match the Selectivity filter motif; the sequence is GMGD. A Ca(2+)-binding site is contributed by D682. Topologically, residues 686-693 are extracellular; that stretch reads LSSAKYPV. The chain crosses the membrane as a helical span at residues 694 to 722; the sequence is VFILLLVTYIILTFVLLLNMLIALMGETV. Residues 723 to 871 are Cytoplasmic-facing; it reads GQVSKESKHI…PKWRTDDAPL (149 aa). Y805 bears the Phosphotyrosine; by SRC-type Tyr-kinases mark. The interval 812 to 831 is interaction with calmodulin and ITPR3; sequence HTVGRLRRDRWSSVVPRVVE. A Phosphoserine; by PKC and PKA modification is found at S824. Positions 850-871 are disordered; the sequence is NPNCDGHQQGYAPKWRTDDAPL.

It belongs to the transient receptor (TC 1.A.4) family. TrpV subfamily. TRPV4 sub-subfamily. Homotetramer. Interacts with calmodulin. Interacts with CTNNB1. The TRPV4 and CTNNB1 complex can interact with CDH1. Part of a complex containing MLC1, AQP4, HEPACAM and ATP1B1. Interacts with MAP7 and Src family Tyr protein kinases LYN, SRC, FYN, HCK, LCK and YES. Interacts with PACSIN1, PACSIN2 and PACSIN3 (via SH3 domain). Interacts with ITPR3. Interacts with AQP5; the interaction is probably indirect and regulates TRPV4 activation by hypotonicity. Interacts with ANO1. Interacts (via C-terminus) with PKD2 (via C-terminus). Interacts with DDX3X; this interaction is decreased when the channel is activated. Post-translationally, N-glycosylated. Detected in liver, kidney, heart, brain cortex, cerebellum and brainstem (at protein level). Expressed in salivary glands (at protein level). Expressed in heart, lung, spleen, liver, kidney, brain, skeletal muscle and testis. In the central nervous system, expressed in the lamina terminalis (arched vascular organ and neurons of the subfornical organ), median preoptic area, ventral hippocampal commissure, and ependymal cells of the choroid plexus. In the cochlea, expressed in both inner and outer hair cells, and in marginal cells of the cochlear stria vascularis. Expressed in large neurons of the trigeminal ganglion. In the kidney cortex, strongly expressed by epithelial cells of tubules and much weaker in glomeruli.

The protein resides in the cell membrane. It is found in the apical cell membrane. The protein localises to the cell junction. Its subcellular location is the adherens junction. It localises to the cell projection. The protein resides in the cilium. It carries out the reaction Ca(2+)(in) = Ca(2+)(out). Its function is as follows. Non-selective calcium permeant cation channel involved in osmotic sensitivity and mechanosensitivity. Activation by exposure to hypotonicity within the physiological range exhibits an outward rectification. Also activated by heat, low pH, citrate and phorbol esters. Increase of intracellular Ca(2+) potentiates currents. Channel activity seems to be regulated by a calmodulin-dependent mechanism with a negative feedback mechanism. Acts as a regulator of intracellular Ca(2+) in synoviocytes. Plays an obligatory role as a molecular component in the nonselective cation channel activation induced by 4-alpha-phorbol 12,13-didecanoate and hypotonic stimulation in synoviocytes and also regulates production of IL-8. Together with PKD2, forms mechano- and thermosensitive channels in cilium. Promotes cell-cell junction formation in skin keratinocytes and plays an important role in the formation and/or maintenance of functional intercellular barriers. Negatively regulates expression of PPARGC1A, UCP1, oxidative metabolism and respiration in adipocytes. Regulates expression of chemokines and cytokines related to pro-inflammatory pathway in adipocytes. Together with AQP5, controls regulatory volume decrease in salivary epithelial cells. Required for normal development and maintenance of bone and cartilage. In its inactive state, may sequester DDX3X at the plasma membrane. When activated, the interaction between both proteins is affected and DDX3X relocalizes to the nucleus. In neurons of the central nervous system, could play a role in triggering voluntary water intake in response to increased sodium concentration in body fluid. The polypeptide is Transient receptor potential cation channel subfamily V member 4 (Trpv4) (Mus musculus (Mouse)).